Here is a 561-residue protein sequence, read N- to C-terminus: Tectonic-like complex member MKS1 (561 aa).

Residues 314 to 442 form the C2 B9-type domain; sequence LRLFVNGEVV…TVSTWRPMEL (129 aa).

As to quaternary structure, part of the tectonic-like complex (also named B9 complex). Interacts with TMEM107. Interacts with TCTN3, AHI1, TCTN1, TCTN2, CC2D2A. Interacts with FLNA. Interacts with TMEM67. Interacts with B9D1 and B9D2. In terms of tissue distribution, widely expressed in embryo at 15.5 dpc, with a relatively strong expression in brain, liver, kidney and digits of the upper limbs. Highly expressed in bronchiolar epithelium.

It is found in the cytoplasm. It localises to the cytoskeleton. The protein resides in the cilium basal body. Its subcellular location is the microtubule organizing center. The protein localises to the centrosome. Component of the tectonic-like complex, a complex localized at the transition zone of primary cilia and acting as a barrier that prevents diffusion of transmembrane proteins between the cilia and plasma membranes. Involved in centrosome migration to the apical cell surface during early ciliogenesis. Required for ciliary structure and function, including a role in regulating length and appropriate number through modulating centrosome duplication. Required for cell branching morphology. The protein is Tectonic-like complex member MKS1 (Mks1) of Mus musculus (Mouse).